A 245-amino-acid chain; its full sequence is 8-amino-3,8-dideoxy-manno-octulosonate cytidylyltransferase (245 aa).

The protein belongs to the KdsB family.

The protein resides in the cytoplasm. It catalyses the reaction 8-amino-3,8-dideoxy-alpha-D-manno-octulosonate + CTP = CMP-8-amino-3,8-dideoxy-alpha-D-manno-oct-2-ulosonate + diphosphate. The protein operates within bacterial outer membrane biogenesis; lipopolysaccharide biosynthesis. In terms of biological role, activates KDO8N (a required 8-carbon sugar) for incorporation into bacterial lipopolysaccharide in the Shewanella genus. The chain is 8-amino-3,8-dideoxy-manno-octulosonate cytidylyltransferase from Shewanella putrefaciens (strain CN-32 / ATCC BAA-453).